The following is a 205-amino-acid chain: Troponin I, cardiac muscle (205 aa).

The segment at 1-38 is disordered; the sequence is MADQSGNAAPPPVRRRSSANYRAYATEPHAKKKSKISA. Position 2 is an N-acetylalanine (Ala2). Ser5 carries the phosphoserine modification. A phosphoserine; by PKA and PKD/PRKD1 mark is found at Ser17 and Ser18. Residue Tyr21 is modified to Phosphotyrosine. Phosphothreonine; by STK4/MST1 is present on Thr26. The interval 27 to 74 is involved in binding TNC; sequence EPHAKKKSKISASRKLQLKTLMLQIAKQELEREAVERRGEKGRALSTR. Phosphoserine; by PKC/PRKCE occurs at positions 37 and 39. Thr46 bears the Phosphothreonine; by STK4/MST1 mark. Ser72 bears the Phosphoserine mark. Thr73 carries the post-translational modification Phosphothreonine. Residues 124 to 145 are involved in binding TNC and actin; sequence NQKIFDLRGKFKRPTLRRVRIS. Thr138 is modified (phosphothreonine; by STK4/MST1). Residue Ser145 is modified to Phosphoserine; by PAK3. At Thr176 the chain carries Phosphothreonine. Ser194 is subject to Phosphoserine.

The protein belongs to the troponin I family. In terms of assembly, binds to actin and tropomyosin. Interacts with TRIM63. Interacts with STK4/MST1. In terms of processing, phosphorylated at Ser-17 and Ser-18 by PRKD1; phosphorylation reduces myofilament calcium sensitivity. Phosphorylated preferentially at Thr-26. Phosphorylation by STK4/MST1 alters its binding affinity to TNNC1 (cardiac Tn-C) and TNNT2 (cardiac Tn-T). Phosphorylated at Ser-37 and Ser-39 by PRKCE; phosphorylation increases myocardium contractile dysfunction.

In terms of biological role, troponin I is the inhibitory subunit of troponin, the thin filament regulatory complex which confers calcium-sensitivity to striated muscle actomyosin ATPase activity. This chain is Troponin I, cardiac muscle (TNNI3), found in Equus caballus (Horse).